The chain runs to 59 residues: UPF0434 protein Mmc1_0910 (59 aa).

It belongs to the UPF0434 family.

In Magnetococcus marinus (strain ATCC BAA-1437 / JCM 17883 / MC-1), this protein is UPF0434 protein Mmc1_0910.